Reading from the N-terminus, the 673-residue chain is DNA ligase (673 aa).

Residues 33–37 (DSVYD), 82–83 (SL), and E117 contribute to the NAD(+) site. The active-site N6-AMP-lysine intermediate is K119. NAD(+) is bound by residues R140, E177, K295, and K319. C413, C416, C431, and C436 together coordinate Zn(2+). The BRCT domain maps to 595-673 (AVSQVLAGKK…EAELLALDPK (79 aa)).

It belongs to the NAD-dependent DNA ligase family. LigA subfamily. Mg(2+) is required as a cofactor. Mn(2+) serves as cofactor.

The catalysed reaction is NAD(+) + (deoxyribonucleotide)n-3'-hydroxyl + 5'-phospho-(deoxyribonucleotide)m = (deoxyribonucleotide)n+m + AMP + beta-nicotinamide D-nucleotide.. Functionally, DNA ligase that catalyzes the formation of phosphodiester linkages between 5'-phosphoryl and 3'-hydroxyl groups in double-stranded DNA using NAD as a coenzyme and as the energy source for the reaction. It is essential for DNA replication and repair of damaged DNA. In Synechococcus sp. (strain JA-3-3Ab) (Cyanobacteria bacterium Yellowstone A-Prime), this protein is DNA ligase.